The following is a 1031-amino-acid chain: Toll-like receptor 9 (1031 aa).

The signal sequence occupies residues 1-25 (MGPCHGALQPLSLLVQAAMLAVALA). Residues 26–817 (QGTLPPFLPC…LCLDESLSWD (792 aa)) lie on the Extracellular side of the membrane. Cys35 and Cys45 are joined by a disulfide. 47-51 (WLFLK) is a binding site for DNA. 26 LRR repeats span residues 62 to 85 (RDNV…DFAQ), 87 to 110 (SNLQ…HFPC), 122 to 147 (VPTL…SLVS), 150 to 166 (LSRT…LTGL), 167 to 190 (HALR…ALEV), 198 to 221 (LGNL…LPPS), 223 to 242 (EYLL…DLAN), 243 to 268 (LTAL…CVEC), 283 to 306 (LSRL…WFRG), 308 to 332 (GNLT…AFQG), 333 to 356 (LAQL…HLTL), 363 to 386 (LLSL…TLQP), 390 to 413 (LPML…IFKD), 414 to 438 (FPGL…ATTG), 470 to 494 (CKNL…MFAQ), 496 to 519 (SRLQ…QFVP), 520 to 543 (LTSL…SFTE), 545 to 567 (PRLE…VGHN), 574 to 598 (LPTL…LCST), 600 to 622 (LWAL…LYLR), 627 to 650 (LRSL…TLGN), 652 to 675 (PKSL…SLTL), 676 to 699 (LPNL…SLPS), 701 to 723 (TQLQ…FFAL), 724 to 747 (ATRL…WFGF), and 749 to 772 (AGSL…AFVD). An N-linked (GlcNAc...) asparagine glycan is attached at Asn64. Residues 72–77 (SNRIHH) and 95–109 (KWNC…MHFP) each bind DNA. Residues Cys98 and Cys110 are joined by a disulfide bond. The N-linked (GlcNAc...) asparagine glycan is linked to Asn129. DNA is bound by residues Tyr132, Arg152, and 179–181 (YYK). Cys178 and Cys184 are oxidised to a cystine. An N-linked (GlcNAc...) asparagine glycan is attached at Asn200. Tyr208 provides a ligand contact to DNA. N-linked (GlcNAc...) asparagine glycans are attached at residues Asn210 and Asn242. 2 disulfides stabilise this stretch: Cys255/Cys268 and Cys258/Cys265. Cys258 carries S-palmitoyl cysteine lipidation. A DNA-binding site is contributed by Arg262. The S-palmitoyl cysteine moiety is linked to residue Cys265. 2 N-linked (GlcNAc...) asparagine glycosylation sites follow: Asn309 and Asn340. Cys470 and Cys500 are joined by a disulfide. Residues Asn472 and Asn513 are each glycosylated (N-linked (GlcNAc...) asparagine). An N-linked (GlcNAc...) asparagine glycan is attached at Asn567. N-linked (GlcNAc...) asparagine glycans are attached at residues Asn669 and Asn694. N-linked (GlcNAc...) asparagine glycosylation is present at Asn731. 2 disulfide bridges follow: Cys764/Cys790 and Cys766/Cys809. Residues 818–838 (CFGLSLLVVALGLAMPMLHHL) form a helical membrane-spanning segment. The Cytoplasmic portion of the chain corresponds to 839 to 1031 (CGWDLWYCFH…NFCRGPTMAE (193 aa)). Residues 866-1011 (LSYDAFVVFD…SFWAQLGMAL (146 aa)) form the TIR domain.

It belongs to the Toll-like receptor family. Monomer and homodimer. Exists as a monomer in the absence of unmethylated cytidine-phosphate-guanosine (CpG) ligand. Proteolytic processing of an insertion loop (Z-loop) is required for homodimerization upon binding to the unmethylated CpG ligand leading to its activation. Interacts with MYD88 via their respective TIR domains. Interacts with BTK. Interacts (via transmembrane domain) with UNC93B1. Interacts with CD300LH; the interaction may promote full activation of TLR9-triggered innate responses. Interacts with CNPY3 and HSP90B1; this interaction is required for proper folding in the endoplasmic reticulum. Interacts with SMPDL3B. Interacts with CD82; this interaction is essential for TLR9-dependent myddosome formation in response to CpG stimulation. Post-translationally, activated by proteolytic cleavage of the flexible loop between repeats LRR14 and LRR15 within the ectodomain. Cleavage requires UNC93B1. Proteolytically processed by first removing the majority of the ectodomain by either asparagine endopeptidase (AEP) or a cathepsin followed by a trimming event that is solely cathepsin mediated and required for optimal receptor signaling. Palmitoylated by ZDHHC3 in the Golgi regulates TLR9 trafficking from the Golgi to endosomes. Depalmitoylation by PPT1 controls the release of TLR9 from UNC93B1 in endosomes. In terms of tissue distribution, expressed in airway epithelium, vascular endothelium and inflammatory cells in blood vessels of the lungs (at protein level). Highly expressed in pulmonary intravascular macrophages (PIMs) and to a lesser extent in alveolar macrophages, neutrophiles, type-II alveolar epithelial cells and bronchial epithelial cells of the lungs (at protein level). High constitutive intracellular expression in leukocytes including polymorphonuclear leukocytes (PMNs), CD4 and CD8 T cells (at protein level). Expressed throughout the respiratory tract including larynx, upper, middle and lower trachea, and bronchus in isolated equine respiratory epithelial cells (ERECs) and in fully differentiated ERECs cultured at the air-fluid interface (AFI) (at protein level). Constitutively expressed in peripheral blood mononuclear cells (PBMCs), lymph nodes and spleen. The level of expression in PBMCs is about 2- to 3-fold higher than that in lymph nodes and spleen. Very low expression in liver, heart, lung, kidney, small intestine, colon and stomach. Low expression in the airway tissue epithelium of the larynx, upper trachea, middle tranchea, lower trachea, bronchus and spleen, and more abundant expression in mesenteric lymph node. Not expressed in fully differentiated bronchus epithelial cells cultured at the AFI for four weeks. Expressed in gingival tissue.

The protein resides in the endoplasmic reticulum membrane. The protein localises to the endosome. Its subcellular location is the lysosome. It localises to the cytoplasmic vesicle. It is found in the phagosome. The protein resides in the cell membrane. The protein localises to the cytoplasm. Its subcellular location is the nucleus. Its function is as follows. Key component of innate and adaptive immunity. TLRs (Toll-like receptors) control host immune response against pathogens through recognition of molecular patterns specific to microorganisms. TLR9 is a nucleotide-sensing TLR which is activated by unmethylated cytidine-phosphate-guanosine (CpG) dinucleotides. Acts via MYD88 and TRAF6, leading to NF-kappa-B activation, cytokine secretion and the inflammatory response. Upon CpG stimulation, induces B-cell proliferation, activation, survival and antibody production. The chain is Toll-like receptor 9 from Equus caballus (Horse).